The chain runs to 644 residues: Exoribonuclease 2 (644 aa).

Residues 189–516 enclose the RNB domain; that stretch reads RQDLTALNFV…NHRLLKAVIK (328 aa). Residues 561–643 form the S1 motif domain; the sequence is NTRFAAEIID…ETRSIIARPA (83 aa).

Belongs to the RNR ribonuclease family. RNase II subfamily.

The protein localises to the cytoplasm. It catalyses the reaction Exonucleolytic cleavage in the 3'- to 5'-direction to yield nucleoside 5'-phosphates.. Its function is as follows. Involved in mRNA degradation. Hydrolyzes single-stranded polyribonucleotides processively in the 3' to 5' direction. This Salmonella dublin (strain CT_02021853) protein is Exoribonuclease 2.